The following is a 473-amino-acid chain: Ribulose bisphosphate carboxylase large chain (473 aa).

A propeptide spanning residues 1-2 (MS) is cleaved from the precursor. Pro-3 is subject to N-acetylproline. N6,N6,N6-trimethyllysine is present on Lys-14. Residues Asn-123 and Thr-173 each contribute to the substrate site. Lys-175 functions as the Proton acceptor in the catalytic mechanism. Lys-177 serves as a coordination point for substrate. Mg(2+)-binding residues include Lys-201, Asp-203, and Glu-204. Position 201 is an N6-carboxylysine (Lys-201). The active-site Proton acceptor is His-294. Arg-295, His-327, and Ser-379 together coordinate substrate.

It belongs to the RuBisCO large chain family. Type I subfamily. As to quaternary structure, heterohexadecamer of 8 large chains and 8 small chains; disulfide-linked. The disulfide link is formed within the large subunit homodimers. The cofactor is Mg(2+). In terms of processing, the disulfide bond which can form in the large chain dimeric partners within the hexadecamer appears to be associated with oxidative stress and protein turnover.

The protein resides in the plastid. Its subcellular location is the chloroplast. It carries out the reaction 2 (2R)-3-phosphoglycerate + 2 H(+) = D-ribulose 1,5-bisphosphate + CO2 + H2O. The catalysed reaction is D-ribulose 1,5-bisphosphate + O2 = 2-phosphoglycolate + (2R)-3-phosphoglycerate + 2 H(+). RuBisCO catalyzes two reactions: the carboxylation of D-ribulose 1,5-bisphosphate, the primary event in carbon dioxide fixation, as well as the oxidative fragmentation of the pentose substrate in the photorespiration process. Both reactions occur simultaneously and in competition at the same active site. The polypeptide is Ribulose bisphosphate carboxylase large chain (Monarda didyma (Scarlet bee-balm)).